Reading from the N-terminus, the 140-residue chain is UPF0299 membrane protein CGSHiGG_01475 (140 aa).

4 helical membrane passes run 1–21 (MIQKLFLLVRSLVILSIMLYL), 33–52 (VPGSIWGLLLLFLGLTTRVI), 60–80 (GASLLIRFMAVLFVPVSVGII), and 92–112 (ILLVPNIVSTCVTLLVIGFLG).

The protein belongs to the UPF0299 family.

The protein localises to the cell inner membrane. The polypeptide is UPF0299 membrane protein CGSHiGG_01475 (Haemophilus influenzae (strain PittGG)).